The following is a 415-amino-acid chain: MVKLLLVGFVVAGIILGTQANEYLDFNVTEIDRIEELEFGFSKYSSNLNPLMVGLTLIRGADSGAVCLDGTLPGYHLHRGHGSGANSWLIQLEGGGWCNNIRTCVYRKTTRRGSSNYMEKQLQFTGILSDKAQENPDFFNWNRVKLRYCDGASFSGDGQNQAAQLQFRGERIWRAAIDDLKANGMRYANQALLSGCSAGGLAAILRCDEFRNLFPGSTKVKCLSDAGLFLDTADVSGGRTIRNLYNGVVELQSVKNNLPRICTNHLDPTSCFFPQNLISQMKTPLFIVNAAYDTWQIQSSIAPTSADPSGFWHDCRLNHGKCTPAQLRFLQGFREQMLRVVKGFSMSRQNGLFINSCFAHCQTERQDTWFADDSPVIRKKAVAIAVGDWYFDRAEVKLVDCPYPCDKSCHNLVFR.

Positions 1–20 (MVKLLLVGFVVAGIILGTQA) are cleaved as a signal peptide. Asparagine 27 is a glycosylation site (N-linked (GlcNAc...) asparagine). Active-site charge relay system residues include serine 197, aspartate 293, and histidine 360.

It belongs to the pectinacetylesterase family.

The protein resides in the secreted. Its subcellular location is the cell wall. Hydrolyzes acetyl esters in homogalacturonan regions of pectin. In type I primary cell wall, galacturonic acid residues of pectin can be acetylated at the O-2 and O-3 positions. Decreasing the degree of acetylation of pectin gels in vitro alters their physical properties. This is Pectin acetylesterase 12 from Arabidopsis thaliana (Mouse-ear cress).